The following is a 344-amino-acid chain: Peroxidase 36 (344 aa).

Residues 1 to 28 (MNTKTVKSMAGIVLSQISLVALFPLCIC) form the signal peptide. 4 cysteine pairs are disulfide-bonded: Cys50-Cys130, Cys83-Cys88, Cys136-Cys337, and Cys215-Cys247. The Proton acceptor role is filled by His81. The Ca(2+) site is built by Asp82, Val85, Gly87, Asp89, and Ser91. Residue Pro178 coordinates substrate. Residue His208 coordinates heme b. Thr209 contacts Ca(2+). Residue Asn224 is glycosylated (N-linked (GlcNAc...) asparagine). The Ca(2+) site is built by Asp260, Thr263, and Asp268.

It belongs to the peroxidase family. Classical plant (class III) peroxidase subfamily. It depends on heme b as a cofactor. The cofactor is Ca(2+).

The protein resides in the secreted. It carries out the reaction 2 a phenolic donor + H2O2 = 2 a phenolic radical donor + 2 H2O. Its function is as follows. Removal of H(2)O(2), oxidation of toxic reductants, biosynthesis and degradation of lignin, suberization, auxin catabolism, response to environmental stresses such as wounding, pathogen attack and oxidative stress. These functions might be dependent on each isozyme/isoform in each plant tissue. In Arabidopsis thaliana (Mouse-ear cress), this protein is Peroxidase 36 (PER36).